The primary structure comprises 815 residues: SNF1 protein kinase subunit beta-1 (815 aa).

The segment covering 1-11 (MGNSPSTQDPS) has biased composition (polar residues). 2 disordered regions span residues 1 to 88 (MGNS…TIDK) and 120 to 146 (HDVG…TVKR). G2 carries N-myristoyl glycine lipidation. The span at 12 to 31 (HSTKKEHGHHFHDAFNKDRQ) shows a compositional bias: basic and acidic residues. The segment covering 32-42 (GSITSQLFNNR) has biased composition (polar residues). S33 bears the Phosphoserine mark. Composition is skewed to basic and acidic residues over residues 72–88 (PSTD…TIDK) and 120–129 (HDVGAPEEQV). S181, S198, S200, S206, S209, and S220 each carry phosphoserine. Disordered stretches follow at residues 311–335 (HANN…NDDF), 363–389 (HHNK…FASL), and 410–444 (PLHP…SSIS). The span at 313-326 (NNNGNIENNTRNKG) shows a compositional bias: low complexity. S331 is subject to Phosphoserine. A compositionally biased stretch (basic residues) spans 363–376 (HHNKTKKAQSKKIR). Low complexity-rich tracts occupy residues 377-389 (SASN…FASL) and 433-444 (HSNSMSSMSSIS). The kinase-interacting sequence (KIS); required for interaction with SNF1 stretch occupies residues 473-716 (VSTDIASALK…LQQGGNIDAE (244 aa)). S494 and S497 each carry phosphoserine. The segment at 581–616 (EPTLDEELPKRPELKRFPSSSRKSSYYSAKGVERPS) is disordered. Positions 587–596 (ELPKRPELKR) are enriched in basic and acidic residues. A compositionally biased stretch (low complexity) spans 599 to 608 (SSSRKSSYYS). Residue S643 is modified to Phosphoserine. An association with SNF1 kinase complex (ASC) domain; required for interaction with SNF4 region spans residues 724–804 (SRYPVPDLPI…FITQVVYAPC (81 aa)).

It belongs to the 5'-AMP-activated protein kinase beta subunit family. In terms of assembly, component of the SNF1 kinase complex, a heterotrimeric complex composed of the catalytic alpha subunit SNF1, one of the three related beta subunits SIP1, SIP2 or GAL83, and the regulatory gamma subunit SNF4. The beta subunit serves as a bridge between the catalytic and the regulatory subunit. Interacts (via KIS domain) with SNF1. Interacts (via ASC domain) with SNF4. Post-translationally, phosphorylated by SNF1 in vitro.

It is found in the cytoplasm. The protein localises to the vacuole membrane. Beta subunit of the SNF1 kinase complex, which is required for transcriptional, metabolic, and developmental adaptations in response to glucose limitation. Has a structural role, mediating heterotrimer formation, and a regulatory role, defining carbon source-regulated subcellular location and substrate specificity of the SNF1 kinase complex. Promotes the PKA-regulated relocalization of the SNF1 kinase complex to the vacuolar membrane in response to various types of carbon stress. The chain is SNF1 protein kinase subunit beta-1 (SIP1) from Saccharomyces cerevisiae (strain RM11-1a) (Baker's yeast).